Reading from the N-terminus, the 212-residue chain is N-(5'-phosphoribosyl)anthranilate isomerase (212 aa).

The protein belongs to the TrpF family.

It carries out the reaction N-(5-phospho-beta-D-ribosyl)anthranilate = 1-(2-carboxyphenylamino)-1-deoxy-D-ribulose 5-phosphate. Its pathway is amino-acid biosynthesis; L-tryptophan biosynthesis; L-tryptophan from chorismate: step 3/5. The polypeptide is N-(5'-phosphoribosyl)anthranilate isomerase (Myxococcus xanthus (strain DK1622)).